A 293-amino-acid polypeptide reads, in one-letter code: PHD finger protein 11A (293 aa).

The C2HC pre-PHD-type zinc-finger motif lies at 25–61; the sequence is KRTCALCPEGHEWSQIYFSPSANIVAHENCLLYSSGL. Residues 91 to 143 form a PHD-type; degenerate zinc finger; the sequence is LKCSFCKNKGATMGYDLQSCTKNYHLSCAMEDHAILQVDEDHGTYKLFCQKHA. The tract at residues 262–293 is disordered; it reads SSSTSGSLLPPEDHQVRCQESPEVQAGSGDSL.

It localises to the nucleus. This chain is PHD finger protein 11A (Phf11a), found in Mus musculus (Mouse).